The chain runs to 430 residues: Enolase (430 aa).

Gln163 contributes to the (2R)-2-phosphoglycerate binding site. Glu205 serves as the catalytic Proton donor. The Mg(2+) site is built by Asp242, Glu288, and Asp315. Lys340, Arg369, Ser370, and Lys391 together coordinate (2R)-2-phosphoglycerate. Lys340 functions as the Proton acceptor in the catalytic mechanism.

The protein belongs to the enolase family. It depends on Mg(2+) as a cofactor.

It is found in the cytoplasm. The protein localises to the secreted. It localises to the cell surface. The catalysed reaction is (2R)-2-phosphoglycerate = phosphoenolpyruvate + H2O. It participates in carbohydrate degradation; glycolysis; pyruvate from D-glyceraldehyde 3-phosphate: step 4/5. Its function is as follows. Catalyzes the reversible conversion of 2-phosphoglycerate (2-PG) into phosphoenolpyruvate (PEP). It is essential for the degradation of carbohydrates via glycolysis. This chain is Enolase, found in Aster yellows witches'-broom phytoplasma (strain AYWB).